We begin with the raw amino-acid sequence, 122 residues long: Large ribosomal subunit protein uL18 (122 aa).

This sequence belongs to the universal ribosomal protein uL18 family. As to quaternary structure, part of the 50S ribosomal subunit; part of the 5S rRNA/L5/L18/L25 subcomplex. Contacts the 5S and 23S rRNAs.

This is one of the proteins that bind and probably mediate the attachment of the 5S RNA into the large ribosomal subunit, where it forms part of the central protuberance. The sequence is that of Large ribosomal subunit protein uL18 from Ruminiclostridium cellulolyticum (strain ATCC 35319 / DSM 5812 / JCM 6584 / H10) (Clostridium cellulolyticum).